A 447-amino-acid chain; its full sequence is Protein TIC 40, chloroplastic (447 aa).

The N-terminal 43 residues, 1 to 43, are a transit peptide targeting the chloroplast; the sequence is MENLTLVSCSASSPKLLIGCNFTSSLKNPTGFSRRTPNIVLRC. The transit peptide at 44–76 directs the protein to the chloroplast; inner membrane; the sequence is SKISASAQSQSPSSRPENTGEIVVVKQRSKAFA. The Chloroplast intermembrane segment spans residues 77–104; it reads SIFSSSRDQQTTSVASPSVPVPPPSSST. A helical transmembrane segment spans residues 105-125; it reads IGSPLFWIGVGVGLSALFSYV. Topologically, residues 126–447 are stromal; that stretch reads TSNLKKYAMQ…ISQLFPGMTG (322 aa). The segment covering 148–160 has biased composition (low complexity); sequence QNSQFNNSGFPSG. Disordered regions lie at residues 148 to 214 and 231 to 261; these read QNSQ…DIEV and KNYAFEDISPEETTKESPFSNYAEVSETNSP. Positions 161-171 are enriched in pro residues; sequence SPFPFPFPPQT. Positions 172-186 are enriched in low complexity; it reads SPASSPFQSQSQSSG. STI1 domains are found at residues 310-344 and 386-425; these read DPTVQKMVYPYLPEEMRNPETFKWMLKNPQYRQQL and PEEVISKIMENPDVAMAFQNPRVQAALMECSENPMNIMKY.

As to quaternary structure, part of the Tic complex. Interacts with HSP93, TIC110 and LTD. As to expression, expressed in seedlings, flowers, leaves, stems and roots.

The protein localises to the plastid. Its subcellular location is the chloroplast inner membrane. Involved in protein precursor import into chloroplasts. Part of the motor complex consisting of a co-chaperone (TIC40) and a chaperone (HSP93) associated with the import channel (TIC110). Causes the release of bound transit peptides from TIC110 and stimulates ATP hydrolysis by HSP93. Involved in reinsertion of proteins from the chloroplast stroma into the inner membrane. This chain is Protein TIC 40, chloroplastic (TIC40), found in Arabidopsis thaliana (Mouse-ear cress).